Consider the following 705-residue polypeptide: Dolichyl-diphosphooligosaccharide--protein glycosyltransferase subunit STT3A (705 aa).

Topologically, residues 1–17 (MTKLGFLRLSYEKQDTL) are cytoplasmic. The chain crosses the membrane as a helical span at residues 18–38 (LKLLILSMAAVLSFSTRLFAV). Residues 39 to 119 (LRFESVIHEF…IDIRNVCVFL (81 aa)) lie on the Lumenal side of the membrane. The DXD motif 1 motif lies at 47-49 (EFD). Aspartate 49 provides a ligand contact to Mn(2+). The chain crosses the membrane as a helical span at residues 120–138 (APLFSSFTTIVTYHLTKEL). Topologically, residues 139-140 (KD) are cytoplasmic. A helical membrane pass occupies residues 141-158 (AGAGLLAAAMIAVVPGYI). The Lumenal segment spans residues 159–169 (SRSVAGSYDNE). 2 residues coordinate Mn(2+): aspartate 167 and glutamate 169. The DXD motif 2 motif lies at 167–169 (DNE). A helical transmembrane segment spans residues 170–189 (GIAIFCMLLTYYMWIKAVKT). The Cytoplasmic segment spans residues 190 to 191 (GS). A helical transmembrane segment spans residues 192 to 206 (IYWAAKCALAYFYMV). At 207 to 211 (SSWGG) the chain is on the lumenal side. The chain crosses the membrane as a helical span at residues 212 to 228 (YVFLINLIPLHVLVLML). Topologically, residues 229–233 (TGRFS) are cytoplasmic. A helical transmembrane segment spans residues 234 to 259 (HRIYVAYCTVYCLGTILSMQISFVGF). Residues 260 to 267 (QPVLSSEH) are Lumenal-facing. Residues 268 to 287 (MAAFGVFGLCQIHAFVDYLR) form a helical membrane-spanning segment. Residues 288–300 (SKLNPQQFEVLFR) are Cytoplasmic-facing. A helical transmembrane segment spans residues 301–321 (SVISLVGFVLLTIGALLMLTG). At 322–356 (KISPWTGRFYSLLDPSYAKNNIPIIASVSEHQPTT) the chain is on the lumenal side. Positions 348-351 (SVSE) match the SVSE motif motif. Residues 357-379 (WSSYYFDLQLLVFMFPVGLYYCF) form a helical membrane-spanning segment. The Cytoplasmic segment spans residues 380–385 (SNLSDA). A helical membrane pass occupies residues 386–402 (RIFIIMYGVTSMYFSAV). Topologically, residues 403–406 (MVRL) are lumenal. Residue arginine 405 coordinates dolichyl diphosphooligosaccharide. Residues 407-428 (MLVLAPVMCILSGIGVSQVLST) form a helical membrane-spanning segment. Topologically, residues 429–453 (YMKNLDISRQDKKSKKQQDSTYPIK) are cytoplasmic. Residues 454 to 473 (NEVASGMILVMAFFLITYTF) traverse the membrane as a helical segment. At 474–705 (HSTWVTSEAY…DLDNRGLSRT (232 aa)) the chain is on the lumenal side. The interacts with target acceptor peptide in protein substrate stretch occupies residues 525–527 (WWD). Residues 525-529 (WWDYG) carry the WWDYG motif motif. Tyrosine 530 contributes to the dolichyl diphosphooligosaccharide binding site. Residues asparagine 537 and asparagine 544 are each glycosylated (N-linked (GlcNAc...) asparagine). An N-linked (GlcNAc...) (high mannose) asparagine glycan is attached at asparagine 548. The short motif at 592-599 (DINKFLWM) is the DK motif element.

Belongs to the STT3 family. Component of the oligosaccharyltransferase (OST) complex. There are 2 OST complexes, OST-A and OST-B, which contain STT3A or STT3B as catalytic subunit, respectively. OST-A and OST-B contain common core subunits RPN1, RPN2, OST48, OST4, DAD1 and TMEM258, and OST-A contains DC2/OSTC and KRTCAP2/KCP2 specific accessory subunits. OST-A complex assembly occurs through the formation of 3 subcomplexes. Subcomplex 1 contains RPN1 and TMEM258, subcomplex 2 contains the OST-A-specific subunits STT3A, DC2/OSTC, and KCP2 as well as the core subunit OST4, and subcomplex 3 contains RPN2, DAD1, and OST48. The OST-A complex can form stable complexes with the Sec61 complex or with both the Sec61 and TRAP complexes. It depends on Mg(2+) as a cofactor. Mn(2+) serves as cofactor.

It is found in the endoplasmic reticulum membrane. It carries out the reaction a di-trans,poly-cis-dolichyl diphosphooligosaccharide + L-asparaginyl-[protein] = N(4)-(oligosaccharide-(1-&gt;4)-N-acetyl-beta-D-glucosaminyl-(1-&gt;4)-N-acetyl-beta-D-glucosaminyl)-L-asparaginyl-[protein] + a di-trans,poly-cis-dolichyl diphosphate + H(+). The protein operates within protein modification; protein glycosylation. Its function is as follows. Catalytic subunit of the oligosaccharyl transferase (OST) complex that catalyzes the initial transfer of a defined glycan (Glc(3)Man(9)GlcNAc(2) in eukaryotes) from the lipid carrier dolichol-pyrophosphate to an asparagine residue within an Asn-X-Ser/Thr consensus motif in nascent polypeptide chains, the first step in protein N-glycosylation. N-glycosylation occurs cotranslationally and the complex associates with the Sec61 complex at the channel-forming translocon complex that mediates protein translocation across the endoplasmic reticulum (ER). All subunits are required for a maximal enzyme activity. This subunit contains the active site and the acceptor peptide and donor lipid-linked oligosaccharide (LLO) binding pockets. STT3A is present in the majority of OST complexes and mediates cotranslational N-glycosylation of most sites on target proteins, while STT3B-containing complexes are required for efficient post-translational glycosylation and mediate glycosylation of sites that have been skipped by STT3A. STT3A-containing OST-A complex is also required to prevent hyperglycosylation of some target proteins by preventing glycosylation of facultative sites before folding of target proteins is completed. The chain is Dolichyl-diphosphooligosaccharide--protein glycosyltransferase subunit STT3A from Bos taurus (Bovine).